Here is a 172-residue protein sequence, read N- to C-terminus: MGSGAEASVAERRPFPVSWDQFHRDCRALTWRLNAVGPFHAVVAITRGGLVPAAIVARELGLRVIDTICVASYAHDKQGELQVLKGVSEQTAALGGGTGKGLLIVDDLVDTGKTGRMVRDLLPDAHFATVYAKPKGKPLVDTFITEVSQDTWIFFPWDTGLSFQPPLKDGAA.

Residues 47–48 (RG) and 106–114 (DDLVDTGKT) each bind 5-phospho-alpha-D-ribose 1-diphosphate. Mg(2+) is bound at residue aspartate 107. Residues aspartate 110 and isoleucine 153 each coordinate guanine. Xanthine contacts are provided by aspartate 110 and isoleucine 153. GMP is bound by residues 110–114 (DTGKT) and 152–153 (WI).

It belongs to the purine/pyrimidine phosphoribosyltransferase family. XGPT subfamily. As to quaternary structure, homotetramer. Requires Mg(2+) as cofactor.

It localises to the cell inner membrane. It carries out the reaction GMP + diphosphate = guanine + 5-phospho-alpha-D-ribose 1-diphosphate. The catalysed reaction is XMP + diphosphate = xanthine + 5-phospho-alpha-D-ribose 1-diphosphate. The enzyme catalyses IMP + diphosphate = hypoxanthine + 5-phospho-alpha-D-ribose 1-diphosphate. It participates in purine metabolism; GMP biosynthesis via salvage pathway; GMP from guanine: step 1/1. It functions in the pathway purine metabolism; XMP biosynthesis via salvage pathway; XMP from xanthine: step 1/1. Its function is as follows. Purine salvage pathway enzyme that catalyzes the transfer of the ribosyl-5-phosphate group from 5-phospho-alpha-D-ribose 1-diphosphate (PRPP) to the N9 position of the 6-oxopurines guanine and xanthine to form the corresponding ribonucleotides GMP (guanosine 5'-monophosphate) and XMP (xanthosine 5'-monophosphate), with the release of PPi. To a lesser extent, also acts on hypoxanthine. The sequence is that of Xanthine-guanine phosphoribosyltransferase from Rhodopseudomonas palustris (strain BisB5).